Consider the following 393-residue polypeptide: MIGTPLKKSATKLMMLGCGELGKEVVIEAQRFGIETIAVDRYADAPAMQVAHRSHVANMLDRDALERIIKQESPDLIVPEIEAINTTFLLELEQQGFRIIPTARATNLTMNREGIRRLAAEDLNLPTAAYRFASSYEEFCQAVEEIGLPCVIKPIMSSSGKGQSTVKTPDDIEKAWNYARQGARGAGERVIIEAFIPFDYEITLLTVRHVDGTSYCPPIGHRQEGGDYQESWQPMPMTDKALAEAQRQAKVITEALGGAGLFGVEFFIQGDTVYFSEVSPRPHDTGMVTMATQNMSEFELHVRAVLGLPIPAIELLSPGASHVVLAGGQDDEVSFSGVEDALRVPGSKVRLFGKPDSRPGRRMGVALVVAPDVDTARKRAEEAAGKIRVEPVK.

N(1)-(5-phospho-beta-D-ribosyl)glycinamide is bound by residues 20-21 (EL) and E80. Residues R112, K153, 158 to 163 (SSGKGQ), 193 to 196 (EAFI), and E201 contribute to the ATP site. In terms of domain architecture, ATP-grasp spans 117-306 (RLAAEDLNLP…EFELHVRAVL (190 aa)). Mg(2+)-binding residues include E265 and E277. N(1)-(5-phospho-beta-D-ribosyl)glycinamide-binding positions include D284, K354, and 361 to 362 (RR).

This sequence belongs to the PurK/PurT family. As to quaternary structure, homodimer.

It catalyses the reaction N(1)-(5-phospho-beta-D-ribosyl)glycinamide + formate + ATP = N(2)-formyl-N(1)-(5-phospho-beta-D-ribosyl)glycinamide + ADP + phosphate + H(+). Its pathway is purine metabolism; IMP biosynthesis via de novo pathway; N(2)-formyl-N(1)-(5-phospho-D-ribosyl)glycinamide from N(1)-(5-phospho-D-ribosyl)glycinamide (formate route): step 1/1. Functionally, involved in the de novo purine biosynthesis. Catalyzes the transfer of formate to 5-phospho-ribosyl-glycinamide (GAR), producing 5-phospho-ribosyl-N-formylglycinamide (FGAR). Formate is provided by PurU via hydrolysis of 10-formyl-tetrahydrofolate. This Syntrophotalea carbinolica (strain DSM 2380 / NBRC 103641 / GraBd1) (Pelobacter carbinolicus) protein is Formate-dependent phosphoribosylglycinamide formyltransferase.